The chain runs to 160 residues: Eosinophil cationic protein (160 aa).

Positions 1-27 are cleaved as a signal peptide; the sequence is MVPKLFTSQICLLLLLGLSGVGGSLHA. A required for nearly all of the bactericidal activities; partially involved in LPS-binding region spans residues 28–72; sequence KPRQFTRAQWFAIQHVSLNPPQCTTAMRVINNYQRRCKDQNTFLR. Residue histidine 42 is the Proton acceptor of the active site. 4 cysteine pairs are disulfide-bonded: cysteine 50/cysteine 110, cysteine 64/cysteine 123, cysteine 82/cysteine 138, and cysteine 89/cysteine 98. Residue tyrosine 60 is modified to 3'-nitrotyrosine. Substrate is bound at residue 65–69; it reads KDQNT. 4 N-linked (GlcNAc...) asparagine glycosylation sites follow: asparagine 86, asparagine 92, asparagine 111, and asparagine 119. The active-site Proton donor is histidine 155.

This sequence belongs to the pancreatic ribonuclease family. As to quaternary structure, interacts with bacterial lipopolysaccharide (LPS) and lipoteichoic acid (LTA). In vitro interacts with phospholipid bilayers.

Its subcellular location is the secreted. In terms of biological role, cytotoxin and helminthotoxin with low-efficiency ribonuclease activity. Possesses a wide variety of biological activities. Exhibits antibacterial activity. This is Eosinophil cationic protein (RNASE3) from Pongo pygmaeus (Bornean orangutan).